Consider the following 79-residue polypeptide: ATP synthase subunit c (79 aa).

Transmembrane regions (helical) follow at residues 11-31 (ISAAIIMGFASIGAAIGIGIL) and 55-75 (IVMGLVDAIPMISVGLGLYLI).

This sequence belongs to the ATPase C chain family. As to quaternary structure, F-type ATPases have 2 components, F(1) - the catalytic core - and F(0) - the membrane proton channel. F(1) has five subunits: alpha(3), beta(3), gamma(1), delta(1), epsilon(1). F(0) has three main subunits: a(1), b(2) and c(10-14). The alpha and beta chains form an alternating ring which encloses part of the gamma chain. F(1) is attached to F(0) by a central stalk formed by the gamma and epsilon chains, while a peripheral stalk is formed by the delta and b chains.

The protein localises to the cell membrane. F(1)F(0) ATP synthase produces ATP from ADP in the presence of a proton or sodium gradient. F-type ATPases consist of two structural domains, F(1) containing the extramembraneous catalytic core and F(0) containing the membrane proton channel, linked together by a central stalk and a peripheral stalk. During catalysis, ATP synthesis in the catalytic domain of F(1) is coupled via a rotary mechanism of the central stalk subunits to proton translocation. Functionally, key component of the F(0) channel; it plays a direct role in translocation across the membrane. A homomeric c-ring of between 10-14 subunits forms the central stalk rotor element with the F(1) delta and epsilon subunits. The chain is ATP synthase subunit c from Wigglesworthia glossinidia brevipalpis.